The chain runs to 1144 residues: DNA polymerase III subunit alpha (1144 aa).

Belongs to the DNA polymerase type-C family. DnaE subfamily. DNA polymerase III contains a core (composed of alpha, epsilon and theta chains) that associates with a tau subunit. This core dimerizes to form the PolIII' complex. PolIII' associates with the gamma complex (composed of gamma, delta, delta', psi and chi chains) and with the beta chain to form the complete DNA polymerase III complex.

It is found in the cytoplasm. It catalyses the reaction DNA(n) + a 2'-deoxyribonucleoside 5'-triphosphate = DNA(n+1) + diphosphate. In terms of biological role, DNA polymerase III is a complex, multichain enzyme responsible for most of the replicative synthesis in bacteria. This DNA polymerase also exhibits 3' to 5' exonuclease activity. The alpha chain is the DNA polymerase. This chain is DNA polymerase III subunit alpha (dnaE), found in Neisseria meningitidis serogroup B (strain ATCC BAA-335 / MC58).